The primary structure comprises 122 residues: Large ribosomal subunit protein uL14 (122 aa).

It belongs to the universal ribosomal protein uL14 family. Part of the 50S ribosomal subunit. Forms a cluster with proteins L3 and L19. In the 70S ribosome, L14 and L19 interact and together make contacts with the 16S rRNA in bridges B5 and B8.

Functionally, binds to 23S rRNA. Forms part of two intersubunit bridges in the 70S ribosome. The protein is Large ribosomal subunit protein uL14 of Cytophaga hutchinsonii (strain ATCC 33406 / DSM 1761 / CIP 103989 / NBRC 15051 / NCIMB 9469 / D465).